A 1600-amino-acid chain; its full sequence is THO complex subunit 2 (1600 aa).

The tract at residues Met-1 to Asn-163 is anchor domain; interaction with THOC5 and THOC7. A bow domain; interaction with THOC1 dock domain and THOC3 region spans residues Leu-164 to Ser-534. A coiled-coil region spans residues Asn-293 to Lys-339. Residues Glu-321–Pro-341 form a disordered region. Residues His-535–Met-686 form an MIF4G domain; interaction with THOC3 and DDX39B region. The interval Ala-687–Lys-1174 is stern domain. The stretch at His-896–Leu-965 forms a coiled coil. The Nuclear localization signal motif lies at Lys-923–Lys-928. The segment at Ser-1175–Asn-1597 is charged domain. The disordered stretch occupies residues Asn-1184–Leu-1600. Positions Pro-1208–Ser-1217 are enriched in low complexity. Basic and acidic residues predominate over residues Lys-1218 to Ser-1234. A Phosphoserine modification is found at Ser-1222. The segment covering Gly-1251–Asn-1263 has biased composition (low complexity). Composition is skewed to basic and acidic residues over residues Ala-1265–Thr-1285, Ile-1294–Lys-1343, and Ser-1353–Glu-1383. Thr-1385 bears the Phosphothreonine mark. Ser-1390, Ser-1393, and Ser-1417 each carry phosphoserine. Residues Pro-1416–Lys-1425 show a composition bias toward polar residues. Thr-1443 carries the phosphothreonine modification. Residues Lys-1449–Asn-1504 show a composition bias toward basic and acidic residues. Phosphoserine is present on residues Ser-1450, Ser-1486, and Ser-1516. Positions Arg-1464–Glu-1491 form a coiled coil. Residues Asn-1524–Gln-1585 are compositionally biased toward basic and acidic residues.

The protein belongs to the THOC2 family. As to quaternary structure, component of the THO subcomplex, which is composed of THOC1, THOC2, THOC3, THOC5, THOC6 and THOC7. The THO subcomplex interacts with DDX39B to form the THO-DDX39B complex which multimerizes into a 28-subunit tetrameric assembly. Component of the transcription/export (TREX) complex at least composed of ALYREF/THOC4, DDX39B, SARNP/CIP29, CHTOP and the THO subcomplex; in the complex interacts with THOC1, THOC3, THOC5, THOC7 and DDX39B. TREX seems to have a dynamic structure involving ATP-dependent remodeling. Interacts with POLDIP3 and ZC3H11A.

It is found in the nucleus. The protein resides in the nucleus speckle. It localises to the cytoplasm. Functionally, component of the THO subcomplex of the TREX complex which is thought to couple mRNA transcription, processing and nuclear export, and which specifically associates with spliced mRNA and not with unspliced pre-mRNA. Required for efficient export of polyadenylated RNA and spliced mRNA. The THOC1-THOC2-THOC3 core complex alone is sufficient to bind export factor NXF1-NXT1 and promote ATPase activity of DDX39B; in the complex THOC2 is the only component that directly interacts with DDX39B. TREX is recruited to spliced mRNAs by a transcription-independent mechanism, binds to mRNA upstream of the exon-junction complex (EJC) and is recruited in a splicing- and cap-dependent manner to a region near the 5' end of the mRNA where it functions in mRNA export to the cytoplasm via the TAP/NXF1 pathway. Required for NXF1 localization to the nuclear rim. THOC2 (and probably the THO complex) is involved in releasing mRNA from nuclear speckle domains. Plays a role for proper neuronal development. This chain is THO complex subunit 2 (THOC2), found in Plecturocebus moloch (Dusky titi monkey).